The sequence spans 688 residues: Glycine--tRNA ligase beta subunit (688 aa).

Belongs to the class-II aminoacyl-tRNA synthetase family. Tetramer of two alpha and two beta subunits.

It localises to the cytoplasm. It carries out the reaction tRNA(Gly) + glycine + ATP = glycyl-tRNA(Gly) + AMP + diphosphate. This chain is Glycine--tRNA ligase beta subunit, found in Colwellia psychrerythraea (strain 34H / ATCC BAA-681) (Vibrio psychroerythus).